A 404-amino-acid polypeptide reads, in one-letter code: Glucose-1-phosphate adenylyltransferase (404 aa).

Alpha-D-glucose 1-phosphate-binding positions include Y99, G164, 179–180, and S197; that span reads EK.

It belongs to the bacterial/plant glucose-1-phosphate adenylyltransferase family.

It catalyses the reaction alpha-D-glucose 1-phosphate + ATP + H(+) = ADP-alpha-D-glucose + diphosphate. The protein operates within capsule biogenesis; capsule polysaccharide biosynthesis. Its pathway is glycan biosynthesis; glycogen biosynthesis. Functionally, involved in the biosynthesis of ADP-glucose, a building block, required in the biosynthesis of maltose-1-phosphate (M1P) and in the elongation reactions to produce linear alpha-1,4-glucans. Catalyzes the reaction between ATP and alpha-D-glucose 1-phosphate (G1P) to produce pyrophosphate and ADP-Glc. The sequence is that of Glucose-1-phosphate adenylyltransferase from Mycobacterium bovis (strain ATCC BAA-935 / AF2122/97).